The sequence spans 37 residues: MSDIN-like toxin proprotein 5 (37 aa).

Positions 1–10 are excised as a propeptide; it reads MSDINATRLP. A cross-link (cyclopeptide (Leu-Pro)) is located at residues 11–20; the sequence is LFFPPDFRPP. Residues 21–37 constitute a propeptide that is removed on maturation; sequence CVGDADNFTLTRGENLC.

The protein belongs to the MSDIN fungal toxin family. In terms of processing, processed by the macrocyclase-peptidase enzyme POPB to yield a toxic cyclic decapeptide. POPB first removes 10 residues from the N-terminus. Conformational trapping of the remaining peptide forces the enzyme to release this intermediate rather than proceed to macrocyclization. The enzyme rebinds the remaining peptide in a different conformation and catalyzes macrocyclization of the N-terminal 10 residues. As to expression, expressed in basidiocarps.

Functionally, probable toxin that belongs to the MSDIN-like toxin family responsible for a large number of food poisoning cases and deaths. The sequence is that of MSDIN-like toxin proprotein 5 from Amanita exitialis (Guangzhou destroying angel).